The chain runs to 457 residues: Glycerol-3-phosphate acyltransferase, chloroplastic (457 aa).

The transit peptide at Met1–Thr88 directs the protein to the chloroplast. Residues His227–Asp232 carry the HXXXXD motif motif.

Belongs to the GPAT/DAPAT family. In terms of processing, the N-terminus is blocked.

The protein localises to the plastid. It is found in the chloroplast stroma. The catalysed reaction is sn-glycerol 3-phosphate + an acyl-CoA = a 1-acyl-sn-glycero-3-phosphate + CoA. It participates in phospholipid metabolism; CDP-diacylglycerol biosynthesis; CDP-diacylglycerol from sn-glycerol 3-phosphate: step 1/3. In terms of biological role, esterifies acyl-group from acyl-ACP to the sn-1 position of glycerol-3-phosphate. The enzyme from chilling-resistant plants discriminates against non-fluid palmitic acid and selects oleic acid whereas the enzyme from sensitive plants accepts both fatty acids. This is an oleate-selective acyltransferase. The protein is Glycerol-3-phosphate acyltransferase, chloroplastic (GPAT) of Pisum sativum (Garden pea).